The primary structure comprises 101 residues: Ubiquitin-related modifier 1 (101 aa).

Gly-101 is modified (1-thioglycine). Residue Gly-101 forms a Glycyl lysine isopeptide (Gly-Lys) (interchain with K-? in acceptor proteins) linkage.

This sequence belongs to the URM1 family. Post-translationally, C-terminal thiocarboxylation occurs in 2 steps, it is first acyl-adenylated (-COAMP) via the hesA/moeB/thiF part of the MOCS3 homolog, then thiocarboxylated (-COSH) via the rhodanese domain of the MOCS3 homolog.

The protein localises to the cytoplasm. It participates in tRNA modification; 5-methoxycarbonylmethyl-2-thiouridine-tRNA biosynthesis. In terms of biological role, acts as a sulfur carrier required for 2-thiolation of mcm(5)S(2)U at tRNA wobble positions of cytosolic tRNA(Lys), tRNA(Glu) and tRNA(Gln). Serves as sulfur donor in tRNA 2-thiolation reaction by being thiocarboxylated (-COSH) at its C-terminus by MOCS3. The sulfur is then transferred to tRNA to form 2-thiolation of mcm(5)S(2)U. Also acts as a ubiquitin-like protein (UBL) that is covalently conjugated via an isopeptide bond to lysine residues of target proteins. The thiocarboxylated form serves as substrate for conjugation and oxidative stress specifically induces the formation of UBL-protein conjugates. The sequence is that of Ubiquitin-related modifier 1 from Gallus gallus (Chicken).